Reading from the N-terminus, the 224-residue chain is UPF0111 protein TC_0063 (224 aa).

It belongs to the UPF0111 family.

In Chlamydia muridarum (strain MoPn / Nigg), this protein is UPF0111 protein TC_0063.